Consider the following 283-residue polypeptide: tRNA-cytidine(32) 2-sulfurtransferase (283 aa).

The PP-loop motif motif lies at 32–37; sequence SGGKDS. [4Fe-4S] cluster contacts are provided by Cys-107, Cys-110, and Cys-198.

Belongs to the TtcA family. As to quaternary structure, homodimer. Mg(2+) is required as a cofactor. It depends on [4Fe-4S] cluster as a cofactor.

The protein resides in the cytoplasm. The enzyme catalyses cytidine(32) in tRNA + S-sulfanyl-L-cysteinyl-[cysteine desulfurase] + AH2 + ATP = 2-thiocytidine(32) in tRNA + L-cysteinyl-[cysteine desulfurase] + A + AMP + diphosphate + H(+). Its pathway is tRNA modification. Its function is as follows. Catalyzes the ATP-dependent 2-thiolation of cytidine in position 32 of tRNA, to form 2-thiocytidine (s(2)C32). The sulfur atoms are provided by the cysteine/cysteine desulfurase (IscS) system. This Sorangium cellulosum (strain So ce56) (Polyangium cellulosum (strain So ce56)) protein is tRNA-cytidine(32) 2-sulfurtransferase.